The following is a 279-amino-acid chain: 2'-N-acetylparomamine deacetylase (279 aa).

Histidine 31, aspartate 34, and histidine 157 together coordinate Zn(2+). The segment at 245–279 is disordered; it reads PRRWTGGTAGAGHAAGRRGAPHTERVWTPAPAGAR. The span at 246–258 shows a compositional bias: low complexity; the sequence is RRWTGGTAGAGHA.

The protein belongs to the PIGL family. Zn(2+) serves as cofactor.

The enzyme catalyses 2'-N-acetylparomamine + H2O = paromamine + acetate. It carries out the reaction 2'''-acetyl-6'''-hydroxyneomycin C + H2O = 6'''-deamino-6'''-hydroxyneomycin C + acetate. It functions in the pathway antibiotic biosynthesis; neomycin biosynthesis. In terms of biological role, deacetylase involved in the biosynthesis of neomycin by mediating 2 steps of the pathway. Deacetylates both 2'-N-acetylparomamine and 2'''-acetyl-6'''-hydroxyneomycin C. This Streptomyces fradiae (Streptomyces roseoflavus) protein is 2'-N-acetylparomamine deacetylase (neoL).